We begin with the raw amino-acid sequence, 1842 residues long: MALRGPMKRSHLRQVSAPSVDSLSVPQSQSPEALYNDEHSHQDVHATPDERTIRLSSASLERRQCSLWVHDETFSREEILFNQAAFSDLRVNVGDVIEILPVRSPGDSIHSLKSDLGARSLRDSYLESGSAHLPDPMSKFKTPLQSRCLFVVKPLPQEIKARHPKLEISVTHSVANIFGFKNRTLVNISVVDRGQCSASHVDIAFRDQFLVRSDMWRLVMSELADKIIYKGQKIVFMGSIKATVKNIFIRGKKVLSGYFSPHTIPVFRSESAKYVLFIQMSREMWDFDSEGTGDILFSRVINGFLPELFKRWANSDAKHLVTIVLFTRVEYGSSALGDPLPLSSESLRCISSPNHVPTRDFYRVVVNDMASGHWTTILDELKKDFRTFLRDVSILKMDSPDTPTVDGVKVAPKNKPAIIAGRPSTALRGNILEAIHLASAHLAYDHIDRDMVHTGTSIIVITPGSGVFEVSYESLSSTSEALADRGIAIDLVCLSPMPLHSVPLFKYKAPVERSGSSSFGDFHSSGYSPEMRQSFSFASRTPHLSPKSTMQGSFPGMTHKEHLSARSNEWNYGIPHWLDISYWNPETYREARRIAKKDPNAPIPFTVTKQSKLFVPRVRMYEIQMMGVMESEQSDISIPYLLEGQGVSRTSNAGLGLSPSGLSSSRASFRRNSSYKAQLSDSLRPEPFLQSITNPKDVMLAKSKKTPNQVIAWMDQYDEAVFQPFAKRRQQRKASRPKRPSEPEVQVSNAHERLSARSVLRLREHETNSNSGDRSYPTRTIPRVSETSLSAPQGPVPSKTSSPKKPALKAPSAARTPRMSRTISFALLGFGATPPRAQASTEVNVEHARAQPTSGQKKPSVGFMDTRSVESFSGSDSASISTVIDTSLRPASPHPAPQKSAMTPTRPISIKVPPRQPSEDTEPVDRTVLPESYSTTSTAIPFTGDGRRDSRTKNGPRFELTVSGGSRESSIKSPQNKALAPWVRSINPCNTSRDVLRDTSWFGRWQHAYPRPPHVAVVKWKSLKSPAILPLTTEEFPTAQELGSDYLQTPYRVFPNDDPEGVEVPKTRGILLREMISLRLSHGFQIVIGKHVAEASGQPALETLNVFDTRSLERDGATVFLSKGNTIHRLICVDGGEIEVTRFTHRTSSTLAAGKRDDFSLYTPAMRTILSTEYELKNIKLDPTAEDYNWNYADNYVAGHRDYLFNPAQQLQFWRVRYVLIPMPLQVNNRRHLQSFNEDNEEEIHLLGINQLTHIWQRHRYVPPEEKRFESSNEKKDQNPLNIMYQTRNPSEVVAAELDRILLSDPGLDNSPAQLLPESELLERSSISLSSLAQIIQGEKGVRMMDRRWHWRLHYNCFIGFEFTTWLLQNFRDIDSREEAVQFGNELMKHGLFQHVEKRHNFRDGNYFYQISSEYRVARPESRGSWFPQKKSDKTVPSTAASENPRDSPVNGHSRSDSVETLPPHMPATPSKSKNKATIMLSKMMKYDVDPRKRSNRPEVIDLHYDRLHNPDNCFHIELSWMNTTPKLIEDTVLSWAATAEKFGLKLVQVPIAEGCAISRTQPFRKPYRVSLTVPPPPGPVPTVFNTATFSQLGSSDRHYYHKAMLRKFDFVLDFEARSAFPADVEVSYSWGTPDYQYPQYIHRSGSLLVQITDEGDFLFLANRLVSTRLAAATREGSRYERMDRPEHLRARASTYDPLDRISPRLSPLVRPLHDIGSPISPQGQPSIDSAHLYRAPEHILKSFEEFCNDAARLEQFYSVSHARPVSTKVGPAPTTLMDSSIPTLELPASVVSHHIHPPALMSRASVDGSIPSIDAMTRARNDSLSYKGSPKSGSLRPLNMT.

A compositionally biased stretch (basic residues) spans 1–12 (MALRGPMKRSHL). Disordered regions lie at residues 1–49 (MALR…ATPD), 728–817 (RRQQ…ARTP), and 887–976 (SLRP…SPQN). Polar residues predominate over residues 16–31 (SAPSVDSLSVPQSQSP). Basic and acidic residues predominate over residues 36–49 (NDEHSHQDVHATPD). Over residues 728 to 738 (RRQQRKASRPK) the composition is skewed to basic residues. Positions 750 to 767 (AHERLSARSVLRLREHET) are enriched in basic and acidic residues. Residues 797–814 (PSKTSSPKKPALKAPSAA) are compositionally biased toward low complexity. Positions 963–976 (SGGSRESSIKSPQN) are enriched in polar residues. The 76-residue stretch at 1338-1413 (GEKGVRMMDR…DGNYFYQISS (76 aa)) folds into the DEP domain. Disordered stretches follow at residues 1422 to 1475 (SRGS…KSKN) and 1822 to 1842 (NDSLSYKGSPKSGSLRPLNMT).

Belongs to the IML1 family.

Its subcellular location is the vacuole membrane. The polypeptide is Vacuolar membrane-associated protein iml1 (iml1) (Neosartorya fischeri (strain ATCC 1020 / DSM 3700 / CBS 544.65 / FGSC A1164 / JCM 1740 / NRRL 181 / WB 181) (Aspergillus fischerianus)).